The following is a 62-amino-acid chain: Photosystem II reaction center protein Z (62 aa).

2 consecutive transmembrane segments (helical) span residues 8 to 28 (FLIA…VAYA) and 41 to 61 (YVGS…NFLV).

It belongs to the PsbZ family. PSII is composed of 1 copy each of membrane proteins PsbA, PsbB, PsbC, PsbD, PsbE, PsbF, PsbH, PsbI, PsbJ, PsbK, PsbL, PsbM, PsbT, PsbX, PsbY, PsbZ, Psb30/Ycf12, peripheral proteins PsbO, CyanoQ (PsbQ), PsbU, PsbV and a large number of cofactors. It forms dimeric complexes.

The protein localises to the cellular thylakoid membrane. Functionally, may control the interaction of photosystem II (PSII) cores with the light-harvesting antenna, regulates electron flow through the 2 photosystem reaction centers. PSII is a light-driven water plastoquinone oxidoreductase, using light energy to abstract electrons from H(2)O, generating a proton gradient subsequently used for ATP formation. The polypeptide is Photosystem II reaction center protein Z (Microcystis aeruginosa (strain NIES-843 / IAM M-2473)).